A 215-amino-acid chain; its full sequence is NADH-quinone oxidoreductase subunit C (215 aa).

It belongs to the complex I 30 kDa subunit family. As to quaternary structure, NDH-1 is composed of 14 different subunits. Subunits NuoB, C, D, E, F, and G constitute the peripheral sector of the complex.

The protein localises to the cell inner membrane. The catalysed reaction is a quinone + NADH + 5 H(+)(in) = a quinol + NAD(+) + 4 H(+)(out). NDH-1 shuttles electrons from NADH, via FMN and iron-sulfur (Fe-S) centers, to quinones in the respiratory chain. The immediate electron acceptor for the enzyme in this species is believed to be ubiquinone. Couples the redox reaction to proton translocation (for every two electrons transferred, four hydrogen ions are translocated across the cytoplasmic membrane), and thus conserves the redox energy in a proton gradient. This is NADH-quinone oxidoreductase subunit C from Methylobacterium sp. (strain 4-46).